The primary structure comprises 592 residues: V-type ATP synthase alpha chain (592 aa).

An ATP-binding site is contributed by 232–239 (GPFGAGKT).

This sequence belongs to the ATPase alpha/beta chains family.

The catalysed reaction is ATP + H2O + 4 H(+)(in) = ADP + phosphate + 5 H(+)(out). In terms of biological role, produces ATP from ADP in the presence of a proton gradient across the membrane. The V-type alpha chain is a catalytic subunit. This Clostridium botulinum (strain Eklund 17B / Type B) protein is V-type ATP synthase alpha chain.